Reading from the N-terminus, the 222-residue chain is Gamma-glutamylcyclotransferase and putative RNase MJ0434 (222 aa).

Arginine 75 is a catalytic residue. An RX(4)HXY motif motif is present at residues 75–82; the sequence is RDILIRKY. An O-di-AMP-tyrosine modification is found at tyrosine 82.

In the N-terminal section; belongs to the HepT RNase toxin family. This sequence in the C-terminal section; belongs to the gamma-glutamylcyclotransferase family. As to quaternary structure, homodimer, probably forms a complex with cognate antitoxin MJ0435. Post-translationally, modified by cognate antitoxin MJ0435; probably at least 2 successive AMPylation events occur on Tyr-82.

Probable toxic component of a putative type VII toxin-antitoxin (TA) system, probably an RNase. Probably neutralized by cognate antitoxin MJ0435. Neutralization may be due to AMPylation by MJ0435. This is Gamma-glutamylcyclotransferase and putative RNase MJ0434 from Methanocaldococcus jannaschii (strain ATCC 43067 / DSM 2661 / JAL-1 / JCM 10045 / NBRC 100440) (Methanococcus jannaschii).